The following is a 1548-amino-acid chain: Multidrug resistance protein (1548 aa).

The Cytoplasmic segment spans residues 1 to 238 (MVDNGHVTIA…YHVWAQILPK (238 aa)). The 284-residue stretch at 231-514 (VWAQILPKLL…IPIIISSILQ (284 aa)) folds into the ABC transmembrane type-1 1 domain. The helical transmembrane segment at 239–256 (LLSDVTALMLPVLLEYFV) threads the bilayer. N263 carries an N-linked (GlcNAc...) asparagine glycan. A run of 5 helical transmembrane segments spans residues 266–287 (WGWG…SCSA), 349–367 (VMYF…LLLI), 375–392 (VPGM…AVIS), 463–480 (ATPT…HVSG), and 500–519 (VSFF…FVSA). The Cytoplasmic portion of the chain corresponds to 520–932 (KRVTAFIECP…PWSTYVAYLK (413 aa)). The 222-residue stretch at 634 to 855 (VEEGDREYYQ…ALEETLRGEL (222 aa)) folds into the ABC transporter 1 domain. 667–674 (GSTGSGKS) serves as a coordination point for ATP. A run of 4 helical transmembrane segments spans residues 933 to 950 (SCGG…FALT), 975 to 993 (TYLY…GSPL), 1051 to 1070 (GYLY…IIMV), and 1072 to 1088 (VQPF…YSYY). The ABC transmembrane type-1 2 domain maps to 940–1221 (WGCLLATFAL…LVRQVAMVEA (282 aa)). Residues N1095 and N1154 are each glycosylated (N-linked (GlcNAc...) asparagine). The next 2 helical transmembrane spans lie at 1164-1182 (LEFL…GVIG) and 1186-1205 (GASS…SMTL). At 1206–1548 (TETLNWLVRQ…RIVQPAVLSD (343 aa)) the chain is on the cytoplasmic side. Residues 1286-1521 (LVLEGVQMRY…HQSMFHSMVE (236 aa)) form the ABC transporter 2 domain. ATP is bound at residue 1320 to 1327 (GRTGSGKS).

This sequence belongs to the ABC transporter superfamily. ABCB family. Multidrug resistance exporter (TC 3.A.1.201) subfamily.

It localises to the membrane. The catalysed reaction is ATP + H2O + xenobioticSide 1 = ADP + phosphate + xenobioticSide 2.. The protein is Multidrug resistance protein (PGPA) of Leishmania tarentolae (Sauroleishmania tarentolae).